The primary structure comprises 427 residues: Histidinol dehydrogenase (427 aa).

Residues Tyr125, Gln186, and Asn209 each coordinate NAD(+). Residues Ser234, Gln256, and His259 each coordinate substrate. Zn(2+) contacts are provided by Gln256 and His259. Residues Glu325 and His326 each act as proton acceptor in the active site. Residues His326, Asp359, Glu413, and His419 each contribute to the substrate site. Asp359 provides a ligand contact to Zn(2+). His419 contributes to the Zn(2+) binding site.

This sequence belongs to the histidinol dehydrogenase family. It depends on Zn(2+) as a cofactor.

It carries out the reaction L-histidinol + 2 NAD(+) + H2O = L-histidine + 2 NADH + 3 H(+). It functions in the pathway amino-acid biosynthesis; L-histidine biosynthesis; L-histidine from 5-phospho-alpha-D-ribose 1-diphosphate: step 9/9. Catalyzes the sequential NAD-dependent oxidations of L-histidinol to L-histidinaldehyde and then to L-histidine. This chain is Histidinol dehydrogenase, found in Leptospira interrogans serogroup Icterohaemorrhagiae serovar copenhageni (strain Fiocruz L1-130).